Consider the following 189-residue polypeptide: Endoribonuclease YbeY (189 aa).

The Zn(2+) site is built by histidine 146, histidine 150, and histidine 156.

Belongs to the endoribonuclease YbeY family. Zn(2+) serves as cofactor.

Its subcellular location is the cytoplasm. Its function is as follows. Single strand-specific metallo-endoribonuclease involved in late-stage 70S ribosome quality control and in maturation of the 3' terminus of the 16S rRNA. The protein is Endoribonuclease YbeY of Prochlorococcus marinus (strain MIT 9211).